A 715-amino-acid polypeptide reads, in one-letter code: ATP-dependent RecD2 DNA helicase (715 aa).

A not required for helicase activity region spans residues 1–150; sequence MSAALPAEPF…STLHKMVSSW (150 aa). ATP is bound by residues Gln343 and 363 to 367; that span reads GTGKS. 2 consecutive DNA-binding regions follow at residues Gly391 and 407 to 414; that span reads TVHRLLGY. Residue Gln466 participates in ATP binding. Val470 is a DNA-binding region. Arg493 is a binding site for ATP. 3 DNA-binding regions span residues 554–555, 596–604, and 644–647; these read RK, NDYNNEIFN, and TVHR. Arg679 is an ATP binding site.

It belongs to the RecD family. RecD2 subfamily. In terms of assembly, monomer; homodimers seem to be inactive.

The catalysed reaction is Couples ATP hydrolysis with the unwinding of duplex DNA at the replication fork by translocating in the 5'-3' direction. This creates two antiparallel DNA single strands (ssDNA). The leading ssDNA polymer is the template for DNA polymerase III holoenzyme which synthesizes a continuous strand.. The enzyme catalyses ATP + H2O = ADP + phosphate + H(+). Its function is as follows. DNA-dependent ATPase (ssDNA stimulates the ATPase better than dsDNA) and ATP-dependent 5'-3' DNA helicase. Plays a role in an antioxidant pathway. Involved in DNA damage repair and/or recombination. Appears to move along DNA in single base steps, powered by hydrolysis of 1 molecule of ATP. Has low processivity, unwinds about 15-20 base pairs/second. Short (20 bp) substrates with 5'-overhangs or forked ends are the best substrates, is much less efficient on 52 or 76 bp substrates with 5'-overhangs. The presence of single-stranded DNA-binding protein (SSB) increases unwinding 4-5 fold. Has no activity on blunt DNA or DNA with 3'-overhangs. Requires at least 10 bases of 5'-ssDNA for helicase activity. The protein is ATP-dependent RecD2 DNA helicase of Deinococcus radiodurans (strain ATCC 13939 / DSM 20539 / JCM 16871 / CCUG 27074 / LMG 4051 / NBRC 15346 / NCIMB 9279 / VKM B-1422 / R1).